We begin with the raw amino-acid sequence, 406 residues long: Leu/Ile/Val-binding protein homolog 5 (406 aa).

The signal sequence occupies residues 1–29 (MIGTRLPAWTRVLACGVAGLSLMTISAKA).

Belongs to the leucine-binding protein family.

In terms of biological role, component of an amino-acid transport system. This chain is Leu/Ile/Val-binding protein homolog 5, found in Brucella suis biovar 1 (strain 1330).